A 132-amino-acid polypeptide reads, in one-letter code: uncharacterized protein (132 aa).

The 69-residue stretch at methionine 1–leucine 69 folds into the HTH merR-type domain. Residues glycine 4 to isoleucine 23 constitute a DNA-binding region (H-T-H motif).

It localises to the cytoplasm. This is an uncharacterized protein from Pseudomonas aeruginosa (strain ATCC 15692 / DSM 22644 / CIP 104116 / JCM 14847 / LMG 12228 / 1C / PRS 101 / PAO1).